Reading from the N-terminus, the 677-residue chain is Methionine--tRNA ligase (677 aa).

The short motif at 15 to 25 (PYANGSIHLGH) is the 'HIGH' region element. Cys-146, Cys-149, Cys-159, and Cys-162 together coordinate Zn(2+). The 'KMSKS' region motif lies at 333–337 (KMSKS). Lys-336 is a binding site for ATP. Positions 575–677 (DFAKIDLRVA…SGAKPGQQVK (103 aa)) constitute a tRNA-binding domain.

It belongs to the class-I aminoacyl-tRNA synthetase family. MetG type 1 subfamily. In terms of assembly, homodimer. Zn(2+) serves as cofactor.

It localises to the cytoplasm. It catalyses the reaction tRNA(Met) + L-methionine + ATP = L-methionyl-tRNA(Met) + AMP + diphosphate. Functionally, is required not only for elongation of protein synthesis but also for the initiation of all mRNA translation through initiator tRNA(fMet) aminoacylation. The chain is Methionine--tRNA ligase from Cronobacter sakazakii (strain ATCC BAA-894) (Enterobacter sakazakii).